A 61-amino-acid polypeptide reads, in one-letter code: Large ribosomal subunit protein bL32 (61 aa).

A compositionally biased stretch (basic residues) spans 1-16 (MAVPRRKTSPSRRGMR). The interval 1 to 61 (MAVPRRKTSP…RQVLKVKKED (61 aa)) is disordered. Residues 17-44 (RSADALKKPTYVEDKDSGELRRPHHLDL) show a composition bias toward basic and acidic residues.

Belongs to the bacterial ribosomal protein bL32 family.

This chain is Large ribosomal subunit protein bL32, found in Afipia carboxidovorans (strain ATCC 49405 / DSM 1227 / KCTC 32145 / OM5) (Oligotropha carboxidovorans).